The primary structure comprises 120 residues: Large ribosomal subunit protein bL19 (120 aa).

The protein belongs to the bacterial ribosomal protein bL19 family.

Its function is as follows. This protein is located at the 30S-50S ribosomal subunit interface and may play a role in the structure and function of the aminoacyl-tRNA binding site. This is Large ribosomal subunit protein bL19 from Marinomonas sp. (strain MWYL1).